The chain runs to 260 residues: Flap endonuclease Xni (260 aa).

Asp105 provides a ligand contact to Mg(2+). A 5'-3' exonuclease domain is found at 164-254; that stretch reads SQFLDLLALA…LKDFRVNGPA (91 aa). Residues Leu172, Ala173, Pro181, Ile183, and Ile186 each contribute to the K(+) site. The tract at residues 185-190 is interaction with DNA; that stretch reads GIGPKS.

This sequence belongs to the Xni family. Requires Mg(2+) as cofactor. The cofactor is K(+).

Functionally, has flap endonuclease activity. During DNA replication, flap endonucleases cleave the 5'-overhanging flap structure that is generated by displacement synthesis when DNA polymerase encounters the 5'-end of a downstream Okazaki fragment. This Shewanella sp. (strain ANA-3) protein is Flap endonuclease Xni.